A 232-amino-acid polypeptide reads, in one-letter code: Phospholipase A2 hemilipin (232 aa).

The first 18 residues, 1 to 18 (MTFLILTILATVTPSLYS), serve as a signal peptide directing secretion. The propeptide occupies 19–105 (HVVQRELRVN…QRCSGSAEGR (87 aa)). Residues Trp-115, Gly-117, and Gly-119 each contribute to the Ca(2+) site. Intrachain disulfides connect Cys-116–Cys-137, Cys-136–Cys-175, Cys-143–Cys-168, Cys-166–Cys-206, and Cys-211–Cys-219. N-linked (GlcNAc...) asparagine glycosylation is present at Asn-124. Residue His-140 is part of the active site. Asp-141 serves as a coordination point for Ca(2+). An N-linked (GlcNAc...) asparagine glycan is attached at Asn-157. A propeptide spanning residues 214 to 217 (KRDA) is cleaved from the precursor.

The protein belongs to the phospholipase A2 family. Group III subfamily. Heterodimer composed of a small subunit and a large subunit; disulfid-linked. Ca(2+) is required as a cofactor. In terms of tissue distribution, expressed by the venom gland.

Its subcellular location is the secreted. The catalysed reaction is a 1,2-diacyl-sn-glycero-3-phosphocholine + H2O = a 1-acyl-sn-glycero-3-phosphocholine + a fatty acid + H(+). Functionally, scorpion venom phospholipase A2 (PLA2) that shows high hydrolytic activities towards lecithin and acts as an effective blocker of all angiogenesis key steps in vivo and in vitro. It has no effect on apoptosis and does not display hemolytic, inflammatory or neurotoxic effects. PLA2 catalyzes the calcium-dependent hydrolysis of the 2-acyl groups in 3-sn-phosphoglycerides. The sequence is that of Phospholipase A2 hemilipin from Hemiscorpius lepturus (Scorpion).